The sequence spans 1237 residues: Rho guanine nucleotide exchange factor 10-like protein (1237 aa).

Disordered stretches follow at residues 1–117 (MASS…SSRR) and 132–203 (YDDV…QPKM). Over residues 25 to 45 (EAEDDPGEGFEFDDSDDDEDT) the composition is skewed to acidic residues. Serine 39 is modified (phosphoserine). 2 positions are modified to phosphotyrosine: tyrosine 132 and tyrosine 153. Composition is skewed to basic and acidic residues over residues 146–163 (EAER…RAPQ) and 184–194 (EEAKPEAEPTK). Residue serine 241 is modified to Phosphoserine. In terms of domain architecture, DH spans 276–463 (VRRHILGSIV…ETLAEKLNEQ (188 aa)). 2 disordered regions span residues 1091–1118 (QEEA…PASH) and 1142–1164 (PGPL…HSEE).

Interacts with RHOA, RHOB and RHOC.

It is found in the cytoplasm. Functionally, acts as a guanine nucleotide exchange factor (GEF) for RHOA, RHOB and RHOC. The chain is Rho guanine nucleotide exchange factor 10-like protein (ARHGEF10L) from Bos taurus (Bovine).